The primary structure comprises 377 residues: Putative holocytochrome-c synthase (377 aa).

Disordered stretches follow at residues 1 to 29 and 111 to 136; these read MTSSETTTDHPRTGKCPIDHSKFARSNEA and QNSEATPAVQPPATCPMSNSNQKPAG. A compositionally biased stretch (basic and acidic residues) spans 7–22; it reads TTDHPRTGKCPIDHSK. 2 HRM repeats span residues 114 to 119 and 124 to 129; these read EATPAV and TCPMSN.

Belongs to the cytochrome c-type heme lyase family.

The protein localises to the mitochondrion inner membrane. It is found in the mitochondrion intermembrane space. It carries out the reaction holo-[cytochrome c] = apo-[cytochrome c] + heme b. In terms of biological role, lyase that catalyzes the covalent linking of the heme group to the cytochrome C apoprotein to produce the mature functional cytochrome. In Schizosaccharomyces pombe (strain 972 / ATCC 24843) (Fission yeast), this protein is Putative holocytochrome-c synthase.